A 326-amino-acid polypeptide reads, in one-letter code: Probable oxidoreductase patJ (326 aa).

A disordered region spans residues 287–326 (HGVQPGSVNGSNGHSTGVESKLEQLGSRAQRRVVIDDAGK). The span at 292-304 (GSVNGSNGHSTGV) shows a compositional bias: polar residues.

This sequence belongs to the oxidoreductase OpS7 family.

Its subcellular location is the vacuole lumen. It is found in the cytoplasmic vesicle lumen. The protein operates within mycotoxin biosynthesis; patulin biosynthesis. Probable oxidoreductase; part of the gene cluster that mediates the biosynthesis of patulin, an acetate-derived tetraketide mycotoxin produced by several fungal species that shows antimicrobial properties against several bacteria. PatJ acts with patO in the vacuole to convert gentisyl alcohol to isoepoxydon. The pathway begins with the synthesis of 6-methylsalicylic acid by the polyketide synthase (PKS) patK via condensation of acetate and malonate units. The 6-methylsalicylic acid decarboxylase patG then catalyzes the decarboxylation of 6-methylsalicylic acid to yield m-cresol (also known as 3-methylphenol). These first reactions occur in the cytosol. The intermediate m-cresol is then transported into the endoplasmic reticulum where the cytochrome P450 monooxygenase patH converts it to m-hydroxybenzyl alcohol, which is further converted to gentisyl alcohol by the cytochrome P450 monooxygenase patI. The oxidoreductases patJ and patO further convert gentisyl alcohol to isoepoxydon in the vacuole. PatN catalyzes then the transformation of isoepoxydon into phyllostine. The cluster protein patF is responsible for the conversion from phyllostine to neopatulin whereas the alcohol dehydrogenase patD converts neopatulin to E-ascladiol. The steps between isoepoxydon and E-ascladiol occur in the cytosol, and E-ascladiol is probably secreted to the extracellular space by one of the cluster-specific transporters patC or patM. Finally, the secreted patulin synthase patE catalyzes the conversion of E-ascladiol to patulin. This chain is Probable oxidoreductase patJ, found in Penicillium expansum (Blue mold rot fungus).